Consider the following 788-residue polypeptide: IQ motif and ubiquitin-like domain-containing protein (788 aa).

Positions 1–89 are disordered; it reads MSDPEEERVA…SLGSASGSQD (89 aa). Basic and acidic residues predominate over residues 7–20; that stretch reads ERVADSTAHYEEAG. The span at 31–54 shows a compositional bias: acidic residues; it reads EAEGSDVMPEQDDEVQELTTESEE. The span at 68–78 shows a compositional bias: basic and acidic residues; the sequence is KSDDSKPREEV. Residues 80–89 are compositionally biased toward polar residues; sequence SLGSASGSQD. A Ubiquitin-like domain is found at 127–203; it reads ATVKIVLIPA…VQVEVFSTLP (77 aa). The IQ domain occupies 334–363; it reads RLHAVIVIQTSYRRWHAKRYVESLRKQKKL.

In terms of assembly, component of the axonemal radial spoke 1 (RS1) complex, at least composed of spoke head proteins RSPH1, RSPH3B, RSPH9 and the cilia-specific component RSPH4A or sperm-specific component RSPH6A, spoke stalk proteins RSPH14, DNAJB13, DYDC1, ROPN1L and NME5, and the anchor protein IQUB. Does not appear to be part of radial spoke complexes 2 or 3 (RS2 or RS3). Interacts with CALM1. Interacts with DNAJB13. Interacts with DYNLL2. Interacts with NME5. Interacts with RSPH3. Interacts with RSPH9. Interacts with ZMYND10. Interacts with calmodulin; the interaction occurs in conditions of low but not high calcium. As to expression, expressed in the flagellum of sperm cells and cilia of tracheal epithelial cells (at protein level). High expression in testis, also present in brain and lung.

The protein localises to the cytoplasm. It is found in the cytoskeleton. The protein resides in the flagellum axoneme. Its subcellular location is the cell projection. It localises to the cilium. Anchors the radial spoke 1 (RS1) complex to the A microtubule of outer doublet microtubules in axonemes. The triple radial spokes (RS1, RS2 and RS3) are required to modulate beating of the sperm flagellum. May play a role in inhibiting signaling via MAPK1/ERK2 and MAPK3/ERK1. Additionally, may play a role in the functioning of cilia. Not required for the functioning of tracheal or ependymal cilia. The chain is IQ motif and ubiquitin-like domain-containing protein (Iqub) from Mus musculus (Mouse).